We begin with the raw amino-acid sequence, 302 residues long: Sulfate adenylyltransferase subunit 2 (302 aa).

Belongs to the PAPS reductase family. CysD subfamily. Heterodimer composed of CysD, the smaller subunit, and CysN.

It carries out the reaction sulfate + ATP + H(+) = adenosine 5'-phosphosulfate + diphosphate. Its pathway is sulfur metabolism; hydrogen sulfide biosynthesis; sulfite from sulfate: step 1/3. With CysN forms the ATP sulfurylase (ATPS) that catalyzes the adenylation of sulfate producing adenosine 5'-phosphosulfate (APS) and diphosphate, the first enzymatic step in sulfur assimilation pathway. APS synthesis involves the formation of a high-energy phosphoric-sulfuric acid anhydride bond driven by GTP hydrolysis by CysN coupled to ATP hydrolysis by CysD. The polypeptide is Sulfate adenylyltransferase subunit 2 (Shigella dysenteriae serotype 1 (strain Sd197)).